A 180-amino-acid polypeptide reads, in one-letter code: Lysine-specific demethylase 5C (180 aa).

The interval 116 to 159 is disordered; sequence PEESLAYSSDAGEGAGHIPKVQGLLENGDSVTSPEKVATEEGSG. Serine 148 is modified (phosphoserine).

Belongs to the JARID1 histone demethylase family. Part of two distinct complexes, one containing E2F6, and the other containing REST. Interacts with ZMYND8. Requires Fe(2+) as cofactor.

Its subcellular location is the nucleus. It catalyses the reaction N(6),N(6),N(6)-trimethyl-L-lysyl(4)-[histone H3] + 3 2-oxoglutarate + 3 O2 = L-lysyl(4)-[histone H3] + 3 formaldehyde + 3 succinate + 3 CO2. In terms of biological role, histone demethylase that specifically demethylates 'Lys-4' of histone H3, thereby playing a central role in histone code. Does not demethylate histone H3 'Lys-9', H3 'Lys-27', H3 'Lys-36', H3 'Lys-79' or H4 'Lys-20'. Demethylates trimethylated and dimethylated but not monomethylated H3 'Lys-4'. Participates in transcriptional repression of neuronal genes by recruiting histone deacetylases and REST at neuron-restrictive silencer elements. Represses the CLOCK-BMAL1 heterodimer-mediated transcriptional activation of the core clock component PER2. This is Lysine-specific demethylase 5C (KDM5C) from Cricetulus griseus (Chinese hamster).